The chain runs to 3381 residues: Versican core protein (3381 aa).

A signal peptide spans 1-20 (MLINIKSILWMCSTLIAAHA). The Ig-like V-type domain maps to 21-147 (LQKVNMEKSP…EDTQDTVSLT (127 aa)). Cystine bridges form between cysteine 44/cysteine 131, cysteine 173/cysteine 244, cysteine 197/cysteine 218, cysteine 271/cysteine 346, and cysteine 295/cysteine 316. Asparagine 57 is a glycosylation site (N-linked (GlcNAc...) asparagine). Link domains are found at residues 151–246 (VVFH…YCYV) and 252–348 (DVFH…YCFK). Residues asparagine 331 and asparagine 352 are each glycosylated (N-linked (GlcNAc...) asparagine). The GAG-alpha (glucosaminoglycan attachment domain) stretch occupies residues 349-1336 (PKQNISEATT…IIEVRENKTG (988 aa)). The span at 417 to 427 (PLTSTHRSATE) shows a compositional bias: polar residues. Disordered regions lie at residues 417 to 437 (PLTS…SMKK) and 603 to 623 (ESVS…MDHR). A glycan (O-linked (Xyl...) (chondroitin sulfate) serine) is linked at serine 660. Positions 816–866 (DNTTSKPLGSTEHVGSPKLPPALITTTGVSGKDKEMPSLTEDGRDEFTRIP) are disordered. Residue asparagine 817 is glycosylated (N-linked (GlcNAc...) asparagine). The segment covering 846 to 863 (GKDKEMPSLTEDGRDEFT) has biased composition (basic and acidic residues). Residues asparagine 965 and asparagine 1017 are each glycosylated (N-linked (GlcNAc...) asparagine). A compositionally biased stretch (basic and acidic residues) spans 1043 to 1052 (EDFLWKEQTP). Disordered stretches follow at residues 1043–1081 (EDFL…SDGS) and 1218–1244 (FSSA…PDEE). Asparagine 1333 carries N-linked (GlcNAc...) asparagine glycosylation. The tract at residues 1337-3074 (RMSDFSVSGH…VEGTAVYLPG (1738 aa)) is GAG-beta. A disordered region spans residues 1338–1362 (MSDFSVSGHPIDSESKEDEPCSEET). The span at 1352 to 1362 (SKEDEPCSEET) shows a compositional bias: acidic residues. Asparagine 1393 is a glycosylation site (N-linked (GlcNAc...) asparagine). Over residues 1417–1428 (KDPEAAEARRGQ) the composition is skewed to basic and acidic residues. Disordered regions lie at residues 1417 to 1446 (KDPE…ESDS), 1455 to 1474 (GLPT…SLEI), and 1484 to 1512 (TAEP…GPDS). N-linked (GlcNAc...) asparagine glycosylation is found at asparagine 1437 and asparagine 1463. Residues serine 1539 and serine 1621 are each glycosylated (O-linked (Xyl...) (chondroitin sulfate) serine). The N-linked (GlcNAc...) asparagine glycan is linked to asparagine 1653. The segment at 1708–1785 (PPLEETTRKE…ERETTSSTVV (78 aa)) is disordered. Over residues 1712–1721 (ETTRKEEEKG) the composition is skewed to basic and acidic residues. Residues 1726 to 1738 (ASTVEVHSPTQRL) show a composition bias toward polar residues. The span at 1743 to 1761 (SPSELESSSETPPDDSAAA) shows a compositional bias: low complexity. A compositionally biased stretch (polar residues) spans 1764–1784 (KSFTSQMTPTQSERETTSSTV). O-linked (Xyl...) (chondroitin sulfate) serine glycosylation is found at serine 1928 and serine 1952. Polar residues predominate over residues 1964–1976 (PSVTPTSDLSNHT). Disordered regions lie at residues 1964 to 1986 (PSVT…GSTL) and 2041 to 2126 (EGAI…QSSV). N-linked (GlcNAc...) asparagine glycans are attached at residues asparagine 1974, asparagine 2045, asparagine 2074, and asparagine 2103. The segment covering 2065–2075 (STEEGEVKENH) has biased composition (basic and acidic residues). Serine 2109 bears the Phosphoserine mark. Residues serine 2240 and serine 2247 are each glycosylated (O-linked (Xyl...) (chondroitin sulfate) serine). N-linked (GlcNAc...) asparagine glycosylation is found at asparagine 2263, asparagine 2290, and asparagine 2356. Disordered regions lie at residues 2338–2388 (EGPF…AETK), 2490–2512 (EQRE…EKAT), and 2594–2615 (TDLD…TQVQ). Polar residues-rich tracts occupy residues 2345-2357 (LTFS…PQNQ) and 2367-2383 (TSRP…ENSV). Serine 2607 and serine 2608 each carry phosphoserine. Threonine 2612 is subject to Phosphothreonine. N-linked (GlcNAc...) asparagine glycosylation is found at asparagine 2623 and asparagine 2641. Residues serine 2714, serine 2715, and serine 2759 are each glycosylated (O-linked (Xyl...) (chondroitin sulfate) serine). A disordered region spans residues 2819–2893 (PPLSIHLGSG…EPSEDESKPK (75 aa)). Positions 2840–2851 (ALPSTDASTPPV) are enriched in polar residues. Residues asparagine 2919 and asparagine 3052 are each glycosylated (N-linked (GlcNAc...) asparagine). The 37-residue stretch at 3074–3110 (GPDRCKMNPCLNGGTCYPTETSYVCTCVPGYSGDRCE) folds into the EGF-like 1 domain. 11 disulfides stabilise this stretch: cysteine 3078–cysteine 3089, cysteine 3083–cysteine 3098, cysteine 3100–cysteine 3109, cysteine 3116–cysteine 3127, cysteine 3121–cysteine 3136, cysteine 3138–cysteine 3147, cysteine 3154–cysteine 3165, cysteine 3182–cysteine 3274, cysteine 3250–cysteine 3266, cysteine 3281–cysteine 3324, and cysteine 3310–cysteine 3337. The region spanning 3112 to 3148 (DFDECHSNPCRNGATCIDGFNTFRCLCLPSYVGALCE) is the EGF-like 2; calcium-binding domain. One can recognise a C-type lectin domain in the interval 3161–3275 (FQGQCYKYFA…CNYHLTYTCK (115 aa)). A Sushi domain is found at 3279–3339 (VACGQPPVVE…WAMPKITCLN (61 aa)). Residues asparagine 3354 and asparagine 3364 are each glycosylated (N-linked (GlcNAc...) asparagine). A compositionally biased stretch (polar residues) spans 3355–3365 (SSSAKDNSINT). The interval 3355-3381 (SSSAKDNSINTSKHDHRWSRRWQESRR) is disordered.

It belongs to the aggrecan/versican proteoglycan family. Interacts with FBLN1. Post-translationally, phosphorylated by FAM20C in the extracellular medium. In terms of processing, proteolytically cleaved by ADAMTS5 and ADAMTS15 in the pericellular matrix surrounding myoblasts, facilitating myoblast contact and fusion which is required for skeletal muscle development and regeneration. Cerebral white matter. Isoform V0 and isoform V1 are expressed in the central nervous system, and in a number of mesenchymal and epithelial tissues; the major isoform V2 is restricted to the central nervous system.

Its subcellular location is the secreted. The protein localises to the extracellular space. It localises to the extracellular matrix. It is found in the cell projection. The protein resides in the cilium. Its subcellular location is the photoreceptor outer segment. The protein localises to the interphotoreceptor matrix. Its function is as follows. May play a role in intercellular signaling and in connecting cells with the extracellular matrix. May take part in the regulation of cell motility, growth and differentiation. Binds hyaluronic acid. The polypeptide is Versican core protein (VCAN) (Bos taurus (Bovine)).